Here is a 1026-residue protein sequence, read N- to C-terminus: Maternal effect protein staufen (1026 aa).

Basic residues predominate over residues Ala-16 to Leu-29. Disordered regions lie at residues Ala-16–Pro-159, Asn-190–Ala-210, and Thr-234–Thr-311. The segment covering Ala-70–Asn-111 has biased composition (low complexity). Residues Gln-112 to Ser-126 are compositionally biased toward polar residues. Low complexity-rich tracts occupy residues Tyr-192–Ala-210 and Thr-234–Val-256. Positions Thr-267–Val-284 are enriched in basic and acidic residues. The span at Ser-285–Ser-303 shows a compositional bias: polar residues. DRBM domains are found at residues Thr-311–Tyr-378 and Pro-490–Thr-557. Phosphoserine occurs at positions 563 and 570. Positions Ser-578–Lys-645 constitute a DRBM 3 domain. The RNA site is built by His-606, Lys-608, Lys-628, Lys-629, and Lys-632. Positions Pro-647–Asp-707 are disordered. Phosphothreonine is present on residues Thr-650 and Thr-655. A Phosphoserine modification is found at Ser-676. Residues Val-678 to Gly-688 show a composition bias toward polar residues. One can recognise a DRBM 4 domain in the interval Asn-711–Ala-781. The interval Glu-855–Ala-948 is disordered. Low complexity predominate over residues Glu-864–Ser-890. The span at Gln-891–Leu-901 shows a compositional bias: polar residues. Low complexity-rich tracts occupy residues Asn-902–Gly-920 and Asn-934–Ser-947. Residues His-951–Lys-1018 form the DRBM 5 domain.

As to quaternary structure, component of neuronal ribonucleoprotein complexes (RNPs) that contains at least various translational repressor and mRNA turnover proteins such as me31B, tral, Upf1, AGO2 and sometimes Fmr1. Polar granules at the posterior pole of the oocyte, and by the time the egg is laid, at the anterior pole.

The protein localises to the cytoplasm. It is found in the cytoplasmic ribonucleoprotein granule. Its function is as follows. RNA-binding protein which forms ribonucleoprotein complexes (RNPs) that play critical roles in the localization, translational repression and turnover of RNAs during embryogenesis, neurotransmission and neurogenesis. In the oocyte, essential for the localization of both the osk/oskar mRNA to the posterior pole and bcd/bicoid RNA to the anterior pole, and is therefore required for the correct anterior-posterior patterning of the developing embryo. Association with osk or bcd at their respective poles, appears to promote the formation and stabilization of the ribonucleoprotein complexes. Integral component of diverse neuritic ribonucleoprotein complexes (RNPs) that mediate the transport, translation and turnover of neuronal RNAs during neuorgenesis and the translation repression of synaptic transcripts in preparation for their dendritic targeting. This Drosophila melanogaster (Fruit fly) protein is Maternal effect protein staufen (stau).